The following is a 357-amino-acid chain: Molybdenum import ATP-binding protein ModC (357 aa).

The ABC transporter domain maps to 1–233; it reads MRLEVEARLR…PFPTSGPGRR (233 aa). Position 31–38 (31–38) interacts with ATP; that stretch reads GRSGSGKT. Residues 293-357 enclose the Mop domain; sequence GISALNVLPG…AVVKTVALDY (65 aa).

The protein belongs to the ABC transporter superfamily. Molybdate importer (TC 3.A.1.8) family. In terms of assembly, the complex is composed of two ATP-binding proteins (ModC), two transmembrane proteins (ModB) and a solute-binding protein (ModA).

The protein localises to the cell inner membrane. It catalyses the reaction molybdate(out) + ATP + H2O = molybdate(in) + ADP + phosphate + H(+). Part of the ABC transporter complex ModABC involved in molybdenum import. Responsible for energy coupling to the transport system. This Rhizobium meliloti (strain 1021) (Ensifer meliloti) protein is Molybdenum import ATP-binding protein ModC.